Reading from the N-terminus, the 378-residue chain is Odorant receptor 33a (378 aa).

At 1–33 (MDSRRKVRSENLYKTYWLYWRLLGVEGDYPFRR) the chain is on the cytoplasmic side. A helical transmembrane segment spans residues 34–54 (LVDFTITSFITILFPVHLILG). At 55–62 (MYKKPQIQ) the chain is on the extracellular side. A helical transmembrane segment spans residues 63–83 (VFRSLHFTSECLFCSYKFFCF). Over 84–127 (RWKLKEIKTIEGLLQDLDSRVESEEERNYFNQNPSRVARMLSKS) the chain is Cytoplasmic. The helical transmembrane segment at 128 to 148 (YLVAAISAIITATVAGLFSTG) threads the bilayer. Topologically, residues 149-163 (RNLMYLGWFPYDFQA) are extracellular. Residues 164 to 184 (TAAIYWISFSYQAIGSSLLIL) form a helical membrane-spanning segment. Topologically, residues 185–254 (ENLANDSYPP…LLRSTLHLSQ (70 aa)) are cytoplasmic. A helical membrane pass occupies residues 255-275 (LGQFLSSGINISITLINILFF). The Extracellular portion of the chain corresponds to 276-285 (AENNFAMLYY). The chain crosses the membrane as a helical span at residues 286–306 (AVFFAAMLIELFPSCYYGILM). At 307–355 (TMEFDKLPYAIFSSNWLKMDKRYNRSLIILMQLTLVPVNIKAGGIVGID) the chain is on the cytoplasmic side. A helical membrane pass occupies residues 356–376 (MSAFFATVRMAYSFYTLALSF). Over 377–378 (RV) the chain is Extracellular.

The protein belongs to the insect chemoreceptor superfamily. Heteromeric odorant receptor channel (TC 1.A.69) family. Or2a subfamily. Interacts with Orco. Complexes exist early in the endomembrane system in olfactory sensory neurons (OSNs), coupling these complexes to the conserved ciliary trafficking pathway. Expressed in 1-2 cells on the distal edge of the antenna but not the maxillary palp.

Its subcellular location is the cell membrane. Its function is as follows. Odorant receptor which mediates acceptance or avoidance behavior, depending on its substrates. The odorant receptor repertoire encodes a large collection of odor stimuli that vary widely in identity, intensity, and duration. May form a complex with Orco to form odorant-sensing units, providing sensitive and prolonged odorant signaling and calcium permeability. This Drosophila melanogaster (Fruit fly) protein is Odorant receptor 33a (Or33a).